We begin with the raw amino-acid sequence, 143 residues long: Transcription antitermination protein NusB (143 aa).

Belongs to the NusB family.

Its function is as follows. Involved in transcription antitermination. Required for transcription of ribosomal RNA (rRNA) genes. Binds specifically to the boxA antiterminator sequence of the ribosomal RNA (rrn) operons. The protein is Transcription antitermination protein NusB of Buchnera aphidicola subsp. Acyrthosiphon pisum (strain 5A).